A 187-amino-acid polypeptide reads, in one-letter code: Adenylate kinase (187 aa).

12 to 17 (GAGKGT) is a binding site for ATP. An NMP region spans residues 32 to 61 (STGDIFRANLAENTELGQKARQFMDAGDLV). AMP contacts are provided by residues threonine 33, arginine 38, 59-61 (DLV), 87-90 (GYPR), and glutamine 94. The tract at residues 128–134 (GRGRADD) is LID. Arginine 129 contacts ATP. Positions 131 and 142 each coordinate AMP. Arginine 170 serves as a coordination point for ATP.

This sequence belongs to the adenylate kinase family. Monomer.

The protein localises to the cytoplasm. The catalysed reaction is AMP + ATP = 2 ADP. It participates in purine metabolism; AMP biosynthesis via salvage pathway; AMP from ADP: step 1/1. Functionally, catalyzes the reversible transfer of the terminal phosphate group between ATP and AMP. Plays an important role in cellular energy homeostasis and in adenine nucleotide metabolism. In Leuconostoc mesenteroides subsp. mesenteroides (strain ATCC 8293 / DSM 20343 / BCRC 11652 / CCM 1803 / JCM 6124 / NCDO 523 / NBRC 100496 / NCIMB 8023 / NCTC 12954 / NRRL B-1118 / 37Y), this protein is Adenylate kinase.